Consider the following 841-residue polypeptide: MSAQSLPAATPPTQKPPRIIRPRPPSRSRAAQSPGPPHNGSSPQELPRNSNDAPTPMCTPIFWEPPAASLKPPALLPPSASRASLDSQTSPDSPSSTPTPSPVSRRSASPEPAPRSPVPPPKPSGSPCTPLLPMAGVLAQNGSASAPGTVRRLAGRFEGGAEGRAQDADAPEPGLQARADVNGEREAPLTGSGSQENGAPDAGLACPPCCPCVCHTTRPGLELRWVPVGGYEEVPRVPRRASPLRTSRSRPHPPSIGHPAVVLTSYRSTAERKLLPLLKPPKPTRVRQDATIFGDPPQPDLDLLSEDGIQTGDSPDEAPQNTPPATVEGREEEGLEVLKEQNWELPLQDEPLYQTYRAAVLSEELWGVGEDGSPSPANAGDAPTFPRPPGPRNTLWQELPAVQASGLLDTLSPQERRMQESLFEVVTSEASYLRSLRLLTDTFVLSQALRDTLTPRDHHTLFSNVQRVQGVSERFLATLLSRVRSSPHISDLCDVVHAHAVGPFSVYVDYVRNQQYQEETYSRLMDTNVRFSAELRRLQSLPKCERLPLPSFLLLPFQRITRLRMLLQNILRQTEEGSSRQENAQKALGAVSKIIERCSAEVGRMKQTEELIRLTQRLRFHKVKALPLVSWSRRLEFQGELTELGCRRGGVLFASRPRFTPLCLLLFSDLLLITQPKSGQRLQVLDYAHRSLVQAQQVPDPSGPPTFRLSLLSNHQGRPTHRLLQASSLSDMQRWLGAFPTPGPLPCSPDTIYEDCDCSQELCSESSAPAKTEGRSLESRAAPKHLHKTPEGWLKGLPGAFPAQLVCEVTGEHERRRHLRQNQRLLEAVGSSSGTPNAPPP.

Disordered stretches follow at residues 1–179 (MSAQ…QARA), 239–261 (RRASPLRTSRSRPHPPSIGHPAV), and 279–333 (KPPK…REEE). Residues 39-53 (NGSSPQELPRNSNDA) show a composition bias toward polar residues. The span at 65 to 110 (PPAASLKPPALLPPSASRASLDSQTSPDSPSSTPTPSPVSRRSASP) shows a compositional bias: low complexity. 2 positions are modified to phosphoserine: Ser-107 and Ser-109. The span at 111-124 (EPAPRSPVPPPKPS) shows a compositional bias: pro residues. Tyr-353 is subject to Phosphotyrosine; by EPHB2. In terms of domain architecture, DH spans 417–601 (RMQESLFEVV…SKIIERCSAE (185 aa)). Residues 765–793 (ESSAPAKTEGRSLESRAAPKHLHKTPEGW) are disordered.

As to quaternary structure, interacts with EPHB2. Interacts with EPHA4. Phosphorylated on tyrosine residues upon EFNA1 stimulation. EPHB2-dependent phosphorylation at Tyr-353 triggers UBE3A-mediated ubiquitination. In terms of processing, ubiquitinated; UBE3A-mediated ubiquitination and degradation by the proteasome promotes EFNB1-dependent synapse formation. In terms of tissue distribution, expressed in the vascular smooth muscle of coronary artery.

It is found in the cell projection. The protein resides in the dendrite. Its function is as follows. Specific GEF for RhoA activation. Does not activate RAC1 or CDC42. Regulates vascular smooth muscle contractility. Negatively regulates excitatory synapse development by suppressing the synapse-promoting activity of EPHB2. The polypeptide is Rho guanine nucleotide exchange factor 15 (ARHGEF15) (Homo sapiens (Human)).